Consider the following 1013-residue polypeptide: Sodium/potassium-transporting ATPase subunit alpha-3 (1013 aa).

Residues 1-10 are compositionally biased toward basic and acidic residues; that stretch reads MGDKKDDKSS. Residues 1–24 are disordered; sequence MGDKKDDKSSPKKSKAKERRDLDD. Topologically, residues 1-77 are cytoplasmic; it reads MGDKKDDKSS…NALTPPPTTP (77 aa). Serine 37 and serine 56 each carry phosphoserine. The segment at 72 to 74 is interaction with phosphoinositide-3 kinase; the sequence is PPP. The helical transmembrane segment at 78 to 98 threads the bilayer; the sequence is EWVKFCRQLFGGFSILLWIGA. Residues 99–121 lie on the Extracellular side of the membrane; sequence ILCFLAYGIQAGTEDDPSGDNLY. A helical membrane pass occupies residues 122–142; that stretch reads LGIVLAAVVIITGCFSYYQEA. Residues 143-278 are Cytoplasmic-facing; the sequence is KSSKIMESFK…VGKTPIAIEI (136 aa). Phosphoserine is present on residues serine 218 and serine 265. Residues 279-298 form a helical membrane-spanning segment; sequence EHFIQLITGVAVFLGVSFFI. The Extracellular portion of the chain corresponds to 299-310; sequence LSLILGYTWLEA. A helical membrane pass occupies residues 311–328; sequence VIFLIGIIVANVPEGLLA. The Cytoplasmic segment spans residues 329-762; sequence TVTVCLTLTA…EEGRLIFDNL (434 aa). The 4-aspartylphosphate intermediate role is filled by aspartate 366. At serine 442 the chain carries Phosphoserine. The residue at position 548 (tyrosine 548) is a Phosphotyrosine. Residues aspartate 707 and aspartate 711 each contribute to the Mg(2+) site. A helical membrane pass occupies residues 763–782; it reads KKSIAYTLTSNIPEITPFLL. At 783-792 the chain is on the extracellular side; sequence FIMANIPLPL. A helical membrane pass occupies residues 793 to 813; the sequence is GTITILCIDLGTDMVPAISLA. At 814–833 the chain is on the cytoplasmic side; sequence YEAAESDIMKRQPRNPRTDK. Residues 834 to 856 traverse the membrane as a helical segment; the sequence is LVNERLISMAYGQIGMIQALGGF. Residues 857–908 are Extracellular-facing; the sequence is FSYFVILAENGFLPGNLVGIRLNWDDRTVNDLEDSYGQQWTYEQRKVVEFTC. A helical membrane pass occupies residues 909-928; sequence HTAFFVSIVVVQWADLIICK. At 929–941 the chain is on the cytoplasmic side; that stretch reads TRRNSVFQQGMKN. Serine 933 carries the post-translational modification Phosphoserine; by PKA. The chain crosses the membrane as a helical span at residues 942 to 960; that stretch reads KILIFGLFEETALAAFLSY. The Extracellular portion of the chain corresponds to 961–975; sequence CPGMDVALRMYPLKP. A helical membrane pass occupies residues 976–996; that stretch reads SWWFCAFPYSFLIFVYDEIRK. Over 997–1013 the chain is Cytoplasmic; the sequence is LILRRNPGGWVEKETYY.

Belongs to the cation transport ATPase (P-type) (TC 3.A.3) family. Type IIC subfamily. In terms of assembly, the sodium/potassium-transporting ATPase is composed of a catalytic alpha subunit, an auxiliary non-catalytic beta subunit and an additional regulatory subunit. Interacts with regulatory subunit FXYD1.

It is found in the cell membrane. It carries out the reaction K(+)(out) + Na(+)(in) + ATP + H2O = K(+)(in) + Na(+)(out) + ADP + phosphate + H(+). Functionally, this is the catalytic component of the active enzyme, which catalyzes the hydrolysis of ATP coupled with the exchange of sodium and potassium ions across the plasma membrane. This action creates the electrochemical gradient of sodium and potassium ions, providing the energy for active transport of various nutrients. The polypeptide is Sodium/potassium-transporting ATPase subunit alpha-3 (Atp1a3) (Mus musculus (Mouse)).